A 388-amino-acid polypeptide reads, in one-letter code: Nitric oxide reductase FlRd-NAD(+) reductase (388 aa).

This sequence belongs to the FAD-dependent oxidoreductase family. The cofactor is FAD.

Its subcellular location is the cytoplasm. It carries out the reaction 2 reduced [nitric oxide reductase rubredoxin domain] + NAD(+) + H(+) = 2 oxidized [nitric oxide reductase rubredoxin domain] + NADH. The protein operates within nitrogen metabolism; nitric oxide reduction. In terms of biological role, one of at least two accessory proteins for anaerobic nitric oxide (NO) reductase. Reduces the rubredoxin moiety of NO reductase. The protein is Nitric oxide reductase FlRd-NAD(+) reductase of Aeromonas hydrophila subsp. hydrophila (strain ATCC 7966 / DSM 30187 / BCRC 13018 / CCUG 14551 / JCM 1027 / KCTC 2358 / NCIMB 9240 / NCTC 8049).